A 373-amino-acid chain; its full sequence is Dual-specificity RNA methyltransferase RlmN (373 aa).

Glutamate 94 serves as the catalytic Proton acceptor. The region spanning 100–339 (DGDRATLCVS…VTVRKTRGDD (240 aa)) is the Radical SAM core domain. Cysteine 107 and cysteine 344 are joined by a disulfide. [4Fe-4S] cluster-binding residues include cysteine 114, cysteine 118, and cysteine 121. S-adenosyl-L-methionine contacts are provided by residues 168–169 (GE), serine 200, 222–224 (SLH), and asparagine 301. The active-site S-methylcysteine intermediate is the cysteine 344.

Belongs to the radical SAM superfamily. RlmN family. It depends on [4Fe-4S] cluster as a cofactor.

The protein localises to the cytoplasm. It catalyses the reaction adenosine(2503) in 23S rRNA + 2 reduced [2Fe-2S]-[ferredoxin] + 2 S-adenosyl-L-methionine = 2-methyladenosine(2503) in 23S rRNA + 5'-deoxyadenosine + L-methionine + 2 oxidized [2Fe-2S]-[ferredoxin] + S-adenosyl-L-homocysteine. It carries out the reaction adenosine(37) in tRNA + 2 reduced [2Fe-2S]-[ferredoxin] + 2 S-adenosyl-L-methionine = 2-methyladenosine(37) in tRNA + 5'-deoxyadenosine + L-methionine + 2 oxidized [2Fe-2S]-[ferredoxin] + S-adenosyl-L-homocysteine. In terms of biological role, specifically methylates position 2 of adenine 2503 in 23S rRNA and position 2 of adenine 37 in tRNAs. m2A2503 modification seems to play a crucial role in the proofreading step occurring at the peptidyl transferase center and thus would serve to optimize ribosomal fidelity. The polypeptide is Dual-specificity RNA methyltransferase RlmN (Photobacterium profundum (strain SS9)).